A 292-amino-acid chain; its full sequence is Acetyl-coenzyme A carboxylase carboxyl transferase subunit beta (292 aa).

The 257-residue stretch at 36-292 (MWSKCEKCAK…LLRMHEVDYE (257 aa)) folds into the CoA carboxyltransferase N-terminal domain. Residues C40, C43, C59, and C62 each coordinate Zn(2+). The segment at 40-62 (CEKCAKILYTEDLRENFNVCPNC) adopts a C4-type zinc-finger fold.

It belongs to the AccD/PCCB family. As to quaternary structure, acetyl-CoA carboxylase is a heterohexamer composed of biotin carboxyl carrier protein (AccB), biotin carboxylase (AccC) and two subunits each of ACCase subunit alpha (AccA) and ACCase subunit beta (AccD). Zn(2+) is required as a cofactor.

The protein localises to the cytoplasm. It carries out the reaction N(6)-carboxybiotinyl-L-lysyl-[protein] + acetyl-CoA = N(6)-biotinyl-L-lysyl-[protein] + malonyl-CoA. It functions in the pathway lipid metabolism; malonyl-CoA biosynthesis; malonyl-CoA from acetyl-CoA: step 1/1. Its function is as follows. Component of the acetyl coenzyme A carboxylase (ACC) complex. Biotin carboxylase (BC) catalyzes the carboxylation of biotin on its carrier protein (BCCP) and then the CO(2) group is transferred by the transcarboxylase to acetyl-CoA to form malonyl-CoA. The protein is Acetyl-coenzyme A carboxylase carboxyl transferase subunit beta of Clostridium perfringens (strain 13 / Type A).